Consider the following 211-residue polypeptide: Hypoxanthine-guanine phosphoribosyltransferase (211 aa).

Residues 1 to 20 (MSNSAKSPSGPVGDEGRRNY) form a disordered region. GMP-binding positions include Lys66, 125-133 (EDIVDSAIT), Lys157, and Asp185. Residue Asp129 is the Proton acceptor of the active site. Asp185 lines the Mg(2+) pocket.

It belongs to the purine/pyrimidine phosphoribosyltransferase family. Mg(2+) serves as cofactor.

It is found in the cytoplasm. The catalysed reaction is IMP + diphosphate = hypoxanthine + 5-phospho-alpha-D-ribose 1-diphosphate. The enzyme catalyses GMP + diphosphate = guanine + 5-phospho-alpha-D-ribose 1-diphosphate. It participates in purine metabolism; IMP biosynthesis via salvage pathway; IMP from hypoxanthine: step 1/1. Converts guanine to guanosine monophosphate, and hypoxanthine to inosine monophosphate. Transfers the 5-phosphoribosyl group from 5-phosphoribosylpyrophosphate onto the purine. Plays a central role in the generation of purine nucleotides through the purine salvage pathway. This is Hypoxanthine-guanine phosphoribosyltransferase from Leishmania donovani.